We begin with the raw amino-acid sequence, 1015 residues long: Transposase for transposon Tn3 (1015 aa).

This sequence belongs to the transposase 7 family.

Functionally, required for transposition of transposon Tn3. The polypeptide is Transposase for transposon Tn3 (tnpA) (Escherichia coli).